The chain runs to 730 residues: Elongation factor 2 (730 aa).

One can recognise a tr-type G domain in the interval 19–228 (TKIRNIGIVA…TGVSFKDVYD (210 aa)). Residues 28-35 (AHIDHGKT), 94-98 (DTPGH), and 148-151 (NKVD) each bind GTP. Diphthamide is present on His596.

The protein belongs to the TRAFAC class translation factor GTPase superfamily. Classic translation factor GTPase family. EF-G/EF-2 subfamily.

The protein localises to the cytoplasm. Catalyzes the GTP-dependent ribosomal translocation step during translation elongation. During this step, the ribosome changes from the pre-translocational (PRE) to the post-translocational (POST) state as the newly formed A-site-bound peptidyl-tRNA and P-site-bound deacylated tRNA move to the P and E sites, respectively. Catalyzes the coordinated movement of the two tRNA molecules, the mRNA and conformational changes in the ribosome. The chain is Elongation factor 2 from Methanosarcina barkeri (strain Fusaro / DSM 804).